The chain runs to 226 residues: Enolase-phosphatase E1 (226 aa).

This sequence belongs to the HAD-like hydrolase superfamily. MasA/MtnC family. As to quaternary structure, monomer. Mg(2+) serves as cofactor.

It carries out the reaction 5-methylsulfanyl-2,3-dioxopentyl phosphate + H2O = 1,2-dihydroxy-5-(methylsulfanyl)pent-1-en-3-one + phosphate. The protein operates within amino-acid biosynthesis; L-methionine biosynthesis via salvage pathway; L-methionine from S-methyl-5-thio-alpha-D-ribose 1-phosphate: step 3/6. Its pathway is amino-acid biosynthesis; L-methionine biosynthesis via salvage pathway; L-methionine from S-methyl-5-thio-alpha-D-ribose 1-phosphate: step 4/6. Functionally, bifunctional enzyme that catalyzes the enolization of 2,3-diketo-5-methylthiopentyl-1-phosphate (DK-MTP-1-P) into the intermediate 2-hydroxy-3-keto-5-methylthiopentenyl-1-phosphate (HK-MTPenyl-1-P), which is then dephosphorylated to form the acireductone 1,2-dihydroxy-3-keto-5-methylthiopentene (DHK-MTPene). The protein is Enolase-phosphatase E1 of Shewanella sp. (strain MR-4).